A 106-amino-acid chain; its full sequence is Large ribosomal subunit protein P1B (106 aa).

S2 bears the N-acetylserine mark. A compositionally biased stretch (low complexity) spans 69-82 (AGAASGAAAAGGDA). A disordered region spans residues 69 to 106 (AGAASGAAAAGGDAAAEEEKEEEAAEESDDDMGFGLFD). Acidic residues predominate over residues 83-100 (AAEEEKEEEAAEESDDDM). S96 carries the phosphoserine modification.

The protein belongs to the eukaryotic ribosomal protein P1/P2 family. As to quaternary structure, component of the large ribosomal subunit (LSU). Mature yeast ribosomes consist of a small (40S) and a large (60S) subunit. The 40S small subunit contains 1 molecule of ribosomal RNA (18S rRNA) and 33 different proteins (encoded by 57 genes). The large 60S subunit contains 3 rRNA molecules (25S, 5.8S and 5S rRNA) and 46 different proteins (encoded by 81 genes). The 5 acidic ribosomal P-proteins form the stalk structure of the 60S subunit. They are organized as a pentameric complex in which uL10/P0 interacts with 2 heterodimers, P1A-P2B and P1B-P2A.

It is found in the cytoplasm. Its function is as follows. Component of the ribosome, a large ribonucleoprotein complex responsible for the synthesis of proteins in the cell. The small ribosomal subunit (SSU) binds messenger RNAs (mRNAs) and translates the encoded message by selecting cognate aminoacyl-transfer RNA (tRNA) molecules. The large subunit (LSU) contains the ribosomal catalytic site termed the peptidyl transferase center (PTC), which catalyzes the formation of peptide bonds, thereby polymerizing the amino acids delivered by tRNAs into a polypeptide chain. The nascent polypeptides leave the ribosome through a tunnel in the LSU and interact with protein factors that function in enzymatic processing, targeting, and the membrane insertion of nascent chains at the exit of the ribosomal tunnel. This is Large ribosomal subunit protein P1B from Saccharomyces cerevisiae (strain ATCC 204508 / S288c) (Baker's yeast).